The primary structure comprises 363 residues: Fructose-bisphosphate aldolase (363 aa).

Substrate is bound by residues Arg56 and Lys147. Glu188 functions as the Proton acceptor in the catalytic mechanism. Lys230 acts as the Schiff-base intermediate with dihydroxyacetone-P in catalysis.

Belongs to the class I fructose-bisphosphate aldolase family.

It catalyses the reaction beta-D-fructose 1,6-bisphosphate = D-glyceraldehyde 3-phosphate + dihydroxyacetone phosphate. Its pathway is carbohydrate degradation; glycolysis; D-glyceraldehyde 3-phosphate and glycerone phosphate from D-glucose: step 4/4. This chain is Fructose-bisphosphate aldolase, found in Schistosoma mansoni (Blood fluke).